A 950-amino-acid polypeptide reads, in one-letter code: Glycine dehydrogenase (decarboxylating) (950 aa).

Residue K699 is modified to N6-(pyridoxal phosphate)lysine.

This sequence belongs to the GcvP family. The glycine cleavage system is composed of four proteins: P, T, L and H. It depends on pyridoxal 5'-phosphate as a cofactor.

The catalysed reaction is N(6)-[(R)-lipoyl]-L-lysyl-[glycine-cleavage complex H protein] + glycine + H(+) = N(6)-[(R)-S(8)-aminomethyldihydrolipoyl]-L-lysyl-[glycine-cleavage complex H protein] + CO2. Its function is as follows. The glycine cleavage system catalyzes the degradation of glycine. The P protein binds the alpha-amino group of glycine through its pyridoxal phosphate cofactor; CO(2) is released and the remaining methylamine moiety is then transferred to the lipoamide cofactor of the H protein. This is Glycine dehydrogenase (decarboxylating) from Chromobacterium violaceum (strain ATCC 12472 / DSM 30191 / JCM 1249 / CCUG 213 / NBRC 12614 / NCIMB 9131 / NCTC 9757 / MK).